The chain runs to 468 residues: 3-isopropylmalate dehydratase large subunit (468 aa).

[4Fe-4S] cluster is bound by residues Cys347, Cys407, and Cys410.

This sequence belongs to the aconitase/IPM isomerase family. LeuC type 1 subfamily. In terms of assembly, heterodimer of LeuC and LeuD. The cofactor is [4Fe-4S] cluster.

The catalysed reaction is (2R,3S)-3-isopropylmalate = (2S)-2-isopropylmalate. It functions in the pathway amino-acid biosynthesis; L-leucine biosynthesis; L-leucine from 3-methyl-2-oxobutanoate: step 2/4. Functionally, catalyzes the isomerization between 2-isopropylmalate and 3-isopropylmalate, via the formation of 2-isopropylmaleate. The polypeptide is 3-isopropylmalate dehydratase large subunit (Prochlorococcus marinus (strain SARG / CCMP1375 / SS120)).